The chain runs to 257 residues: Deoxyribose-phosphate aldolase (257 aa).

D102 serves as the catalytic Proton donor/acceptor. Catalysis depends on K166, which acts as the Schiff-base intermediate with acetaldehyde. K198 functions as the Proton donor/acceptor in the catalytic mechanism.

It belongs to the DeoC/FbaB aldolase family. DeoC type 2 subfamily.

Its subcellular location is the cytoplasm. The catalysed reaction is 2-deoxy-D-ribose 5-phosphate = D-glyceraldehyde 3-phosphate + acetaldehyde. It participates in carbohydrate degradation; 2-deoxy-D-ribose 1-phosphate degradation; D-glyceraldehyde 3-phosphate and acetaldehyde from 2-deoxy-alpha-D-ribose 1-phosphate: step 2/2. Functionally, catalyzes a reversible aldol reaction between acetaldehyde and D-glyceraldehyde 3-phosphate to generate 2-deoxy-D-ribose 5-phosphate. This Shewanella frigidimarina (strain NCIMB 400) protein is Deoxyribose-phosphate aldolase.